We begin with the raw amino-acid sequence, 477 residues long: Cytochrome c-552 (477 aa).

The signal sequence occupies residues 1–26 (MVRISTSISYLWGMVASLFLMMPAYS). His94 provides a ligand contact to heme c. 3 residues coordinate heme: Cys122, Cys125, and Lys126. Cys160, Cys163, His164, Cys209, Cys212, and His213 together coordinate heme c. Ca(2+) contacts are provided by Glu215, Tyr216, Lys261, and Gln263. Tyr216 lines the substrate pocket. His264 serves as a coordination point for substrate. His275, Cys282, Cys285, His286, His301, Cys314, Cys317, His318, and His393 together coordinate heme c.

The protein belongs to the cytochrome c-552 family. It depends on Ca(2+) as a cofactor. Heme c is required as a cofactor.

It localises to the periplasm. It carries out the reaction 6 Fe(III)-[cytochrome c] + NH4(+) + 2 H2O = 6 Fe(II)-[cytochrome c] + nitrite + 8 H(+). It functions in the pathway nitrogen metabolism; nitrate reduction (assimilation). Catalyzes the reduction of nitrite to ammonia, consuming six electrons in the process. In Pectobacterium carotovorum subsp. carotovorum (strain PC1), this protein is Cytochrome c-552.